Here is a 499-residue protein sequence, read N- to C-terminus: Interferon regulatory factor 5 (499 aa).

Positions 12-18 match the Nuclear localization signal motif; the sequence is PRRVRLK. A DNA-binding region (IRF tryptophan pentad repeat) is located at residues 14 to 122; the sequence is RVRLKPWLVA…QPYKVYEVCS (109 aa). The interval 121 to 142 is disordered; the sequence is CSNGPAPAESQPSEDNAEEEEE. Residues 145-155 carry the Nuclear export signal motif; that stretch reads LQKMLPGLSIT. A phosphoserine; by TBK1 mark is found at Ser-153 and Ser-294. At Ser-302 the chain carries Phosphoserine. Glycyl lysine isopeptide (Lys-Gly) (interchain with G-Cter in ubiquitin) cross-links involve residues Lys-412 and Lys-413. 5 positions are modified to phosphoserine: Ser-432, Ser-436, Ser-438, Ser-441, and Ser-447.

This sequence belongs to the IRF family. Homodimer, when phosphorylated. Interacts with TASL (via pLxIS motif); interaction takes place downstream of TLR7, TLR8 or TLR9, leading to its activation. Interacts with MYD88 and TRAF6. In terms of processing, phosphorylation of serine and threonine residues by IKBKB in a C-terminal autoinhibitory region, stimulates dimerization, transport into the nucleus, assembly with the coactivator CBP/EP300 and initiation of transcription. Post-translationally, 'Lys-63'-linked polyubiquitination by TRAF6 is required for activation.

It is found in the cytoplasm. The protein localises to the nucleus. Its activity is regulated as follows. Maintained as a monomer in an autoinhibited state. Phosphorylation and activation follow the following steps: innate adapter protein TASL recruits IRF5, thereby licensing IRF5 for phosphorylation by IKBKB. Phosphorylated IRF5 dissociates from the adapter proteins, dimerizes, and then enters the nucleus to induce IFNs. In terms of biological role, transcription factor that plays a critical role in innate immunity by activating expression of type I interferon (IFN) IFNA and INFB and inflammatory cytokines downstream of endolysosomal toll-like receptors TLR7, TLR8 and TLR9. Regulates the transcription of type I IFN genes (IFN-alpha and IFN-beta) and IFN-stimulated genes (ISG) by binding to an interferon-stimulated response element (ISRE) in their promoters. Can efficiently activate both the IFN-beta (IFNB) and the IFN-alpha (IFNA) genes and mediate their induction downstream of the TLR-activated, MyD88-dependent pathway. In Bos taurus (Bovine), this protein is Interferon regulatory factor 5.